The sequence spans 87 residues: Large ribosomal subunit protein bL27 (87 aa).

Residues Met-1 to Lys-24 form a disordered region.

The protein belongs to the bacterial ribosomal protein bL27 family.

The sequence is that of Large ribosomal subunit protein bL27 from Rickettsia massiliae (strain Mtu5).